A 621-amino-acid polypeptide reads, in one-letter code: Endoglucanase 25 (621 aa).

A disordered region spans residues 1–26 (MYGRDPWGGPLEINTADSATDDDRSR). Topologically, residues 1-70 (MYGRDPWGGP…DLGCIIVSRK (70 aa)) are cytoplasmic. Residues 48 to 49 (LL) are polarized targeting signal 1 (PTS1). Residues 59 to 62 (YVDL) form a polarized targeting signal 2 (PTS2) region. A helical; Signal-anchor for type II membrane protein transmembrane segment spans residues 71 to 91 (IFVWTVGTLVAAALLAGFITL). The Extracellular segment spans residues 92–621 (IVKTVPRHHP…PPPPPAPWKP (530 aa)). 2 N-linked (GlcNAc...) asparagine glycosylation sites follow: Asn108 and Asn133. The active-site Nucleophile is Asp165. Residues Asn216, Asn324, Asn345, Asn408, and Asn425 are each glycosylated (N-linked (GlcNAc...) asparagine). Active-site residues include His513 and Asp561. Asn567 carries an N-linked (GlcNAc...) asparagine glycan. Residue Glu570 is part of the active site.

This sequence belongs to the glycosyl hydrolase 9 (cellulase E) family. Glycosylated. N-glycosylation of KOR in the endoplasmic reticulum followed by N-glycan modifications in the Golgi are essential for catalytic activity. As to expression, highly expressed in roots and stems, at intermediate levels in leaves and flowers, and at lower levels in siliques. Expressed in xylem (at protein level).

It is found in the cell membrane. The catalysed reaction is Endohydrolysis of (1-&gt;4)-beta-D-glucosidic linkages in cellulose, lichenin and cereal beta-D-glucans.. Required for cellulose microfibril formation. Involved in cell wall assembly during cell elongation and cell plate maturation in cytokinesis. Required for secondary cell wall formation in the developing xylem. May cycle through different intracellular compartments, including plasma membrane. This chain is Endoglucanase 25 (KOR), found in Arabidopsis thaliana (Mouse-ear cress).